A 203-amino-acid chain; its full sequence is Peptidyl-tRNA hydrolase (203 aa).

Tyr-14 contacts tRNA. His-19 serves as the catalytic Proton acceptor. The tRNA site is built by Tyr-64, Asn-66, and Asn-112.

Belongs to the PTH family. Monomer.

Its subcellular location is the cytoplasm. It carries out the reaction an N-acyl-L-alpha-aminoacyl-tRNA + H2O = an N-acyl-L-amino acid + a tRNA + H(+). Hydrolyzes ribosome-free peptidyl-tRNAs (with 1 or more amino acids incorporated), which drop off the ribosome during protein synthesis, or as a result of ribosome stalling. Its function is as follows. Catalyzes the release of premature peptidyl moieties from peptidyl-tRNA molecules trapped in stalled 50S ribosomal subunits, and thus maintains levels of free tRNAs and 50S ribosomes. This is Peptidyl-tRNA hydrolase from Methylobacterium sp. (strain 4-46).